We begin with the raw amino-acid sequence, 385 residues long: Proteinase-activated receptor 4 (385 aa).

An N-terminal signal peptide occupies residues 1–17 (MWGRLLLWPLVLGFSLS). A propeptide spans 18–47 (GGTQTPSVYDESGSTGGGDDSTPSILPAPR) (removed for receptor activation). The tract at residues 21–42 (QTPSVYDESGSTGGGDDSTPSI) is disordered. Over 48-82 (GYPGQVCANDSDTLELPDSSRALLLGWVPTRLVPA) the chain is Extracellular. Residue asparagine 56 is glycosylated (N-linked (GlcNAc...) asparagine). The chain crosses the membrane as a helical span at residues 83–103 (LYGLVLVVGLPANGLALWVLA). Residues 104-108 (TQAPR) lie on the Cytoplasmic side of the membrane. Residues 109–129 (LPSTMLLMNLAAADLLLALAL) form a helical membrane-spanning segment. Over 130-151 (PPRIAYHLRGQRWPFGEAACRL) the chain is Extracellular. A disulfide bridge links cysteine 149 with cysteine 228. The chain crosses the membrane as a helical span at residues 152-172 (ATAALYGHMYGSVLLLAAVSL). Over 173–192 (DRYLALVHPLRARALRGRRL) the chain is Cytoplasmic. Residues 193–213 (ALGLCMAAWLMAAALALPLTL) traverse the membrane as a helical segment. At 214–247 (QRQTFRLARSDRVLCHDALPLDAQASHWQPAFTC) the chain is on the extracellular side. Residues 248–268 (LALLGCFLPLLAMLLCYGATL) traverse the membrane as a helical segment. Residues 269–283 (HTLAASGRRYGHALR) lie on the Cytoplasmic side of the membrane. The helical transmembrane segment at 284–304 (LTAVVLASAVAFFVPSNLLLL) threads the bilayer. Residues 305 to 319 (LHYSDPSPSAWGNLY) are Extracellular-facing. Residues 320 to 343 (GAYVPSLALSTLNSCVDPFIYYYV) traverse the membrane as a helical segment. Topologically, residues 344 to 385 (SAEFRDKVRAGLFQRSPGDTVASKASAEGGSRGMGTHSSLLQ) are cytoplasmic. The interval 362-385 (DTVASKASAEGGSRGMGTHSSLLQ) is disordered.

The protein belongs to the G-protein coupled receptor 1 family. In terms of processing, a proteolytic cleavage generates a new N-terminus that functions as a tethered ligand. In terms of tissue distribution, widely expressed, with highest levels in lung, pancreas, thyroid, testis and small intestine. Not expressed in brain, kidney, spinal cord and peripheral blood leukocytes. Also detected in platelets.

The protein localises to the cell membrane. Activated upon interaction by mucunain, a cowhage (Mucuna pruriens) plant cysteine proteinase. In terms of biological role, receptor for activated thrombin or trypsin coupled to G proteins that stimulate phosphoinositide hydrolysis. May play a role in platelets activation. The polypeptide is Proteinase-activated receptor 4 (F2RL3) (Homo sapiens (Human)).